The sequence spans 184 residues: Cathelicidin-related peptide Pt_CRAMP2 (184 aa).

The first 22 residues, 1–22 (MDGFFWKTWLVVAALAIGGTSS), serve as a signal peptide directing secretion. Positions 23–150 (LPHKPLTYEE…EDEKDQPRRV (128 aa)) are excised as a propeptide. 2 disulfide bridges follow: Cys-81–Cys-92 and Cys-103–Cys-120. The span at 125 to 144 (EDEEQNQEEEEEEEKEEDEK) shows a compositional bias: acidic residues. A disordered region spans residues 125-147 (EDEEQNQEEEEEEEKEEDEKDQP).

It belongs to the cathelicidin family. As to expression, expressed by the venom gland.

The protein resides in the secreted. It is found in the target cell membrane. Potent antimicrobial peptide against most of Gram-negative bacteria, some Gram-positive bacteria (Bacillus) and some fungi (C.albicans, P.pastoris, A.terreus, A.nidulans, and C.globosum). Adopts an amphipathic alpha helical conformation, that may allow to partition into the target membrane. No hemolytic and cytotoxic activities have been observed on mammalian cells. This chain is Cathelicidin-related peptide Pt_CRAMP2, found in Pseudonaja textilis (Eastern brown snake).